Here is a 161-residue protein sequence, read N- to C-terminus: MSQLTHINAAGEAHMVDVSAKAETVREARAEAFVTMRSETLAMIVDGKHHKGDVFATARIAGIQAAKRTWELIPLCHPLLLSKVEIQLQAEPEYNRVRIESLCRLTGKTGVEMEALTAASVAALTIYDMCKAVQKDMVIGPVRLLAKSGGKSGDFKVDAHD.

Substrate contacts are provided by residues 75–77 (LCH) and 113–114 (ME). Aspartate 128 is a catalytic residue.

Belongs to the MoaC family. As to quaternary structure, homohexamer; trimer of dimers.

The catalysed reaction is (8S)-3',8-cyclo-7,8-dihydroguanosine 5'-triphosphate = cyclic pyranopterin phosphate + diphosphate. The protein operates within cofactor biosynthesis; molybdopterin biosynthesis. Catalyzes the conversion of (8S)-3',8-cyclo-7,8-dihydroguanosine 5'-triphosphate to cyclic pyranopterin monophosphate (cPMP). This is Cyclic pyranopterin monophosphate synthase from Salmonella dublin (strain CT_02021853).